A 236-amino-acid polypeptide reads, in one-letter code: Leucyl/phenylalanyl-tRNA--protein transferase (236 aa).

Polar residues predominate over residues 1-13 (MNSLSYLNQDQQS). Residues 1-22 (MNSLSYLNQDQQSFPPPEQALS) are disordered.

It belongs to the L/F-transferase family.

The protein localises to the cytoplasm. The catalysed reaction is N-terminal L-lysyl-[protein] + L-leucyl-tRNA(Leu) = N-terminal L-leucyl-L-lysyl-[protein] + tRNA(Leu) + H(+). The enzyme catalyses N-terminal L-arginyl-[protein] + L-leucyl-tRNA(Leu) = N-terminal L-leucyl-L-arginyl-[protein] + tRNA(Leu) + H(+). It catalyses the reaction L-phenylalanyl-tRNA(Phe) + an N-terminal L-alpha-aminoacyl-[protein] = an N-terminal L-phenylalanyl-L-alpha-aminoacyl-[protein] + tRNA(Phe). Functionally, functions in the N-end rule pathway of protein degradation where it conjugates Leu, Phe and, less efficiently, Met from aminoacyl-tRNAs to the N-termini of proteins containing an N-terminal arginine or lysine. This chain is Leucyl/phenylalanyl-tRNA--protein transferase, found in Shewanella piezotolerans (strain WP3 / JCM 13877).